The chain runs to 205 residues: Proteasome subunit beta (205 aa).

The propeptide at 1–8 (MDDKQYKG) is removed in mature form; by autocatalysis. T9 serves as the catalytic Nucleophile.

The protein belongs to the peptidase T1B family. The 20S proteasome core is composed of 14 alpha and 14 beta subunits that assemble into four stacked heptameric rings, resulting in a barrel-shaped structure. The two inner rings, each composed of seven catalytic beta subunits, are sandwiched by two outer rings, each composed of seven alpha subunits. The catalytic chamber with the active sites is on the inside of the barrel. Has a gated structure, the ends of the cylinder being occluded by the N-termini of the alpha-subunits. Is capped at one or both ends by the proteasome regulatory ATPase, PAN.

The protein resides in the cytoplasm. It carries out the reaction Cleavage of peptide bonds with very broad specificity.. The formation of the proteasomal ATPase PAN-20S proteasome complex, via the docking of the C-termini of PAN into the intersubunit pockets in the alpha-rings, triggers opening of the gate for substrate entry. Interconversion between the open-gate and close-gate conformations leads to a dynamic regulation of the 20S proteasome proteolysis activity. Component of the proteasome core, a large protease complex with broad specificity involved in protein degradation. In Methanocella paludicola (strain DSM 17711 / JCM 13418 / NBRC 101707 / SANAE), this protein is Proteasome subunit beta.